A 317-amino-acid polypeptide reads, in one-letter code: HTH-type transcriptional regulator MetR (317 aa).

The 59-residue stretch at 1-59 (MIEIKHLKTLQALRNSGSLAAAAAVLHQTQSALSHQFSDLEQRLGFRLFVRKSQPLRFT) folds into the HTH lysR-type domain. The segment at residues 19-38 (LAAAAAVLHQTQSALSHQFS) is a DNA-binding region (H-T-H motif).

The protein belongs to the LysR transcriptional regulatory family.

It localises to the cytoplasm. Functionally, control of the last step in methionine biosynthesis; MetR is a positive activator of the metA, metE and metH genes. It is also a negative regulator of its own expression. This Salmonella typhi protein is HTH-type transcriptional regulator MetR (metR).